The sequence spans 369 residues: Glutamate 5-kinase (369 aa).

K9 serves as a coordination point for ATP. Substrate contacts are provided by S49, D136, and N148. Residues 168 to 169 and 210 to 216 each bind ATP; these read TD and TGGMLTK. Residues 275–355 enclose the PUA domain; sequence RGSVYVDEGA…KGVFIHRDDW (81 aa).

It belongs to the glutamate 5-kinase family.

The protein localises to the cytoplasm. It carries out the reaction L-glutamate + ATP = L-glutamyl 5-phosphate + ADP. It functions in the pathway amino-acid biosynthesis; L-proline biosynthesis; L-glutamate 5-semialdehyde from L-glutamate: step 1/2. Its function is as follows. Catalyzes the transfer of a phosphate group to glutamate to form L-glutamate 5-phosphate. This is Glutamate 5-kinase from Neisseria meningitidis serogroup C / serotype 2a (strain ATCC 700532 / DSM 15464 / FAM18).